Here is a 302-residue protein sequence, read N- to C-terminus: Glycine--tRNA ligase alpha subunit (302 aa).

It belongs to the class-II aminoacyl-tRNA synthetase family. In terms of assembly, tetramer of two alpha and two beta subunits.

The protein resides in the cytoplasm. It carries out the reaction tRNA(Gly) + glycine + ATP = glycyl-tRNA(Gly) + AMP + diphosphate. This is Glycine--tRNA ligase alpha subunit from Enterococcus faecalis (strain ATCC 700802 / V583).